The chain runs to 269 residues: MGILSVDLLITLQILPVFFSNCLFLALYDSVILLKHVVLLLSRSKSTRGQWRRMLTSEGMRCIWKSFLLDAYKQVKLGEDAPNSSVVHVSSPEGGDTSGNGAQEKTVDGTECHLLDFASPERPLVVNFGSATUPPFTNQLPAFSKLVEEFSSVADFLLVYIDEAHPSDGWAVPGDSSLFFEVKKHRNQEDRCAAAHQLLERFSLPPQCRVVADRMDNNANVAYGVAFERVCIVQRQKIAYLGGKGPFFYNLQEVRRWLEKNFSKRUKLD.

Residues 1-9 (MGILSVDLL) are Lumenal-facing. The helical; Signal-anchor for type III membrane protein transmembrane segment at 10–34 (ITLQILPVFFSNCLFLALYDSVILL) threads the bilayer. Residues 35 to 269 (KHVVLLLSRS…KNFSKRUKLD (235 aa)) are Cytoplasmic-facing. Residues 83 to 103 (NSSVVHVSSPEGGDTSGNGAQ) form a disordered region. Sec-133 is an active-site residue. Non-standard amino acids (selenocysteine) are located at Sec-133 and Sec-266.

It belongs to the iodothyronine deiodinase family. As to quaternary structure, predominantly monomer. Can form homodimers but homodimerization is not essential for enzyme activity. Interacts with USP20 and USP33. Interacts with MARCHF6. Post-translationally, ubiquitinated by MARCHF6, leading to its degradation by the proteasome. Deubiquitinated by USP20 and USP33. As to expression, highly expressed in thyroid, mammary and pituitary glands, then in hypothalamus. Low levels detected in diaphragm, heart, kidney and lung.

Its subcellular location is the endoplasmic reticulum membrane. It catalyses the reaction 3,3',5-triiodo-L-thyronine + iodide + A + H(+) = L-thyroxine + AH2. The enzyme catalyses 3,3'-diiodo-L-thyronine + iodide + A + H(+) = 3,3',5'-triiodo-L-thyronine + AH2. It carries out the reaction 3'-iodo-L-thyronine + iodide + A + H(+) = 3',5'-diiodo-L-thyronine + AH2. The catalysed reaction is 3,3'-diiodothyronamine + iodide + A + H(+) = 3,3',5'-triiodothyronamine + AH2. It catalyses the reaction 3'-iodothyronamine + iodide + A + H(+) = 3',5'-diiodothyronamine + AH2. Functionally, plays a crucial role in the metabolism of thyroid hormones (TH) and has specific roles in TH activation and inactivation by deiodination. Catalyzes the deiodination of L-thyroxine (T4) to 3,5,3'-triiodothyronine (T3), 3,3',5'-triiodothyronine (rT3) to 3,3'-diiodothyronine (3,3'-T2) and 3',5'-diiodothyronine (3',5'-T2) to 3'-monoiodothyronine (3'-T1) via outer-ring deiodination (ORD). Catalyzes the phenolic ring deiodinations of 3,3',5'-triiodothyronamine and 3',5'- diiodothyronamine. This is Type II iodothyronine deiodinase (DIO2) from Bos taurus (Bovine).